The chain runs to 2363 residues: Spectrin beta chain, non-erythrocytic 1 (2363 aa).

Thr2 bears the N-acetylthreonine mark. The tract at residues 2–275 (TTTVATDYDN…IITYVVTYYH (274 aa)) is actin-binding. Ile14 and Ser36 each carry phosphoserine. 2 consecutive Calponin-homology (CH) domains span residues 54-158 (AVQK…LRFQ) and 173-278 (KSAK…HYFS). An N6-acetyllysine modification is found at Lys90. Ser228 is modified (phosphoserine). Spectrin repeat units follow at residues 303 to 411 (MIEK…LALR), 423 to 525 (LARR…QRLE), 530 to 636 (LQKI…RLEE), 639 to 742 (RLWK…RLEE), 745 to 847 (LLHQ…ALQD), 850 to 952 (ALYK…DALL), 957 to 1060 (IQNY…SLGE), 1063 to 1166 (KLQQ…NLLS), 1170 to 1259 (AYQQ…RHRK), 1276 to 1376 (DLQK…AQRL), 1381 to 1482 (KAEL…HNLL), 1486 to 1590 (EIHQ…RLEE), 1592 to 1696 (HKAQ…KLDE), 1698 to 1801 (HRLF…TQIL), and 1805 to 1907 (YELH…RVRL). Phosphoserine occurs at positions 817, 903, 1057, 1076, 1079, and 1237. Phosphoserine occurs at positions 1388, 1447, and 1557. Positions 1563 to 2093 (IRQRLADLKQ…LLEVRRQQEE (531 aa)) are interaction with ANK2. A Phosphotyrosine modification is found at Tyr1805. Residues Lys1815, Lys1913, and Lys1989 each carry the N6-acetyllysine modification. 2 Spectrin repeats span residues 1914–2014 (FRFF…EWLR) and 2018–2097 (EVHQ…EERK). A disordered region spans residues 2089–2193 (RQQEEEERKR…AATLPARTLE (105 aa)). 3 positions are modified to phosphoserine: Ser2102, Ser2127, and Ser2137. Residues 2115–2130 (SQQWDTSKGDQVSQNG) are compositionally biased toward polar residues. Thr2146 carries the post-translational modification Phosphothreonine. Residue Ser2147 is modified to Phosphoserine. The segment at 2148 to 2176 (EMVNGAAEQRTSSKESSPVPSPTLDRKAK) is mediates interaction with CAMSAP1. Thr2158 is subject to Phosphothreonine. Residues Ser2159, Ser2160, Ser2163, Ser2164, and Ser2168 each carry the phosphoserine modification. Residue Thr2170 is modified to Phosphothreonine. Ser2183 carries the post-translational modification Phosphoserine. 2 positions are modified to phosphothreonine: Thr2186 and Thr2194. The region spanning 2196-2306 (AAQMEGFLNR…WIQAISSAIS (111 aa)) is the PH domain. The disordered stretch occupies residues 2308 to 2363 (DKHDTSASTQSTPASSRAQTLPTSVVTITSESSPGKREKDKEKDKEKRFSLFGKKK). Phosphoserine occurs at positions 2313 and 2318. Positions 2313 to 2327 (SASTQSTPASSRAQT) are enriched in low complexity. Thr2319 carries the post-translational modification Phosphothreonine. Ser2323 is a glycosylation site (O-linked (GlcNAc) serine). The residue at position 2327 (Thr2327) is a Phosphothreonine. Positions 2328–2340 (LPTSVVTITSESS) are enriched in polar residues. Residues Ser2339 and Ser2340 each carry the phosphoserine modification. A compositionally biased stretch (basic and acidic residues) spans 2341–2356 (PGKREKDKEKDKEKRF).

Belongs to the spectrin family. In terms of assembly, interacts with ANK2. Interacts with CPNE4 (via VWFA domain). Like erythrocyte spectrin, the spectrin-like proteins are capable to form dimers which can further associate to tetramers. Interacts with CAMSAP1. Can form heterodimers with SPTAN1. Isoform 2 is present in brain, heart, kidney and liver (at protein level).

The protein localises to the cytoplasm. The protein resides in the cytoskeleton. Its subcellular location is the endomembrane system. It is found in the myofibril. It localises to the sarcomere. The protein localises to the m line. The protein resides in the cytosol. Its subcellular location is the cell membrane. Its function is as follows. Fodrin, which seems to be involved in secretion, interacts with calmodulin in a calcium-dependent manner and is thus candidate for the calcium-dependent movement of the cytoskeleton at the membrane. Plays a critical role in central nervous system development and function. This is Spectrin beta chain, non-erythrocytic 1 (Sptbn1) from Mus musculus (Mouse).